The sequence spans 430 residues: MKQALRVAVSFFMLWAAVLHAEVRIEITQGVDSARPIGVVPFQWAGPGAAPEDIGGIVAADLRNSGKFNPLDRSRLPQQPGTAQEVQPAAWSALGIDAVVVGQVTPSPDGDYNVTYQLVDTGGAPGTVLAQNTYKVNKKWLRYAGHTASDEVFEKLTGIKGAFRTRIAYVVQTNGGQFPYELRVSDYDGYNQFTVHRSPQPLMSPAWTPDGSKLAYVTFESGRSALVIQTLSNGAVRQVASFPRHNGAPAFSPDGSKLAFALSKTGSLNLYVMDVGSGQIRQVTDGRSNNTEPTWFPDSQNLAFTSDQAGRPQVYKVNVNGGTPQRITWEGSQNQDADVSSDGKTMVMVSSAGGQQHIAKQDLVTGGVQVLSSTFLDETPSLAPNGTMVIYSSSQGMGSVLNLVSTDGRFKARLPATDGQVKSPAWSPYL.

Residues 1-21 form the signal peptide; it reads MKQALRVAVSFFMLWAAVLHA.

It belongs to the TolB family. In terms of assembly, the Tol-Pal system is composed of five core proteins: the inner membrane proteins TolA, TolQ and TolR, the periplasmic protein TolB and the outer membrane protein Pal. They form a network linking the inner and outer membranes and the peptidoglycan layer.

Its subcellular location is the periplasm. Functionally, part of the Tol-Pal system, which plays a role in outer membrane invagination during cell division and is important for maintaining outer membrane integrity. TolB occupies a key intermediary position in the Tol-Pal system because it communicates directly with both membrane-embedded components, Pal in the outer membrane and TolA in the inner membrane. The chain is Tol-Pal system protein TolB from Enterobacter sp. (strain 638).